We begin with the raw amino-acid sequence, 211 residues long: Calcipressin-like protein (211 aa).

Phosphoserine occurs at positions 113 and 117. Thr-182 bears the Phosphothreonine mark.

It belongs to the RCAN family.

Functionally, inhibits calcineurin-dependent transcriptional responses by binding to the catalytic domain of calcineurin. The sequence is that of Calcipressin-like protein (RCN1) from Saccharomyces cerevisiae (strain ATCC 204508 / S288c) (Baker's yeast).